The following is a 205-amino-acid chain: Meiotic nuclear division protein 1 homolog (205 aa).

The residue at position 2 (S2) is an N-acetylserine. Residues 84 to 173 (HKLEVLESQL…EAANRWTDNI (90 aa)) adopt a coiled-coil conformation.

Belongs to the MND1 family. Heterodimer with PSMC3IP/HOP2. MND1-PSMC3IP interacts with DMC1 and RAD51 and binds preferentially to dsDNA.

The protein localises to the nucleus. Required for proper homologous chromosome pairing and efficient cross-over and intragenic recombination during meiosis. Stimulates both DMC1- and RAD51-mediated homologous strand assimilation, which is required for the resolution of meiotic double-strand breaks. The sequence is that of Meiotic nuclear division protein 1 homolog from Homo sapiens (Human).